The sequence spans 351 residues: UDP-3-O-acylglucosamine N-acyltransferase (351 aa).

Catalysis depends on His-240, which acts as the Proton acceptor.

The protein belongs to the transferase hexapeptide repeat family. LpxD subfamily. Homotrimer.

The enzyme catalyses a UDP-3-O-[(3R)-3-hydroxyacyl]-alpha-D-glucosamine + a (3R)-hydroxyacyl-[ACP] = a UDP-2-N,3-O-bis[(3R)-3-hydroxyacyl]-alpha-D-glucosamine + holo-[ACP] + H(+). It participates in bacterial outer membrane biogenesis; LPS lipid A biosynthesis. Functionally, catalyzes the N-acylation of UDP-3-O-acylglucosamine using 3-hydroxyacyl-ACP as the acyl donor. Is involved in the biosynthesis of lipid A, a phosphorylated glycolipid that anchors the lipopolysaccharide to the outer membrane of the cell. This is UDP-3-O-acylglucosamine N-acyltransferase from Pseudomonas fluorescens (strain Pf0-1).